A 446-amino-acid chain; its full sequence is Ribosomal protein uS12 methylthiotransferase RimO (446 aa).

The MTTase N-terminal domain occupies 6-116 (PNIGFISLGC…VMQQVHKYVP (111 aa)). Positions 15, 51, 80, 148, 152, and 155 each coordinate [4Fe-4S] cluster. The Radical SAM core domain occupies 134–375 (LTPKHYAYLK…MQLQQEISAA (242 aa)). Residues 378–446 (QQKVGKVFTV…AYDLYASLIN (69 aa)) form the TRAM domain.

Belongs to the methylthiotransferase family. RimO subfamily. It depends on [4Fe-4S] cluster as a cofactor.

It localises to the cytoplasm. The enzyme catalyses L-aspartate(89)-[ribosomal protein uS12]-hydrogen + (sulfur carrier)-SH + AH2 + 2 S-adenosyl-L-methionine = 3-methylsulfanyl-L-aspartate(89)-[ribosomal protein uS12]-hydrogen + (sulfur carrier)-H + 5'-deoxyadenosine + L-methionine + A + S-adenosyl-L-homocysteine + 2 H(+). In terms of biological role, catalyzes the methylthiolation of an aspartic acid residue of ribosomal protein uS12. This chain is Ribosomal protein uS12 methylthiotransferase RimO, found in Pasteurella multocida (strain Pm70).